A 176-amino-acid polypeptide reads, in one-letter code: CASP-like protein 5A1 (176 aa).

Topologically, residues methionine 1–threonine 35 are cytoplasmic. A helical transmembrane segment spans residues leucine 36–methionine 56. Residues leucine 57–alanine 67 are Extracellular-facing. The chain crosses the membrane as a helical span at residues phenylalanine 68 to isoleucine 88. Residues aspartate 89–serine 102 lie on the Cytoplasmic side of the membrane. The helical transmembrane segment at leucine 103–alanine 123 threads the bilayer. Topologically, residues cysteine 124 to threonine 152 are extracellular. The helical transmembrane segment at alanine 153–leucine 173 threads the bilayer. The Cytoplasmic segment spans residues alanine 174–arginine 176.

Belongs to the Casparian strip membrane proteins (CASP) family. In terms of assembly, homodimer and heterodimers.

The protein resides in the cell membrane. The chain is CASP-like protein 5A1 from Ginkgo biloba (Ginkgo).